The following is a 121-amino-acid chain: Small ribosomal subunit protein uS13 (121 aa).

Residues 95–121 (LPVRGQNTKNNARTRKGKAVAIAGKKK) are disordered. The span at 106–121 (ARTRKGKAVAIAGKKK) shows a compositional bias: basic residues.

Belongs to the universal ribosomal protein uS13 family. Part of the 30S ribosomal subunit. Forms a loose heterodimer with protein S19. Forms two bridges to the 50S subunit in the 70S ribosome.

Functionally, located at the top of the head of the 30S subunit, it contacts several helices of the 16S rRNA. In the 70S ribosome it contacts the 23S rRNA (bridge B1a) and protein L5 of the 50S subunit (bridge B1b), connecting the 2 subunits; these bridges are implicated in subunit movement. Contacts the tRNAs in the A and P-sites. The chain is Small ribosomal subunit protein uS13 from Streptococcus equi subsp. zooepidemicus (strain H70).